The following is a 450-amino-acid chain: Proline--tRNA ligase (450 aa).

This sequence belongs to the class-II aminoacyl-tRNA synthetase family. ProS type 2 subfamily. In terms of assembly, homodimer.

The protein resides in the cytoplasm. It carries out the reaction tRNA(Pro) + L-proline + ATP = L-prolyl-tRNA(Pro) + AMP + diphosphate. Its function is as follows. Catalyzes the attachment of proline to tRNA(Pro) in a two-step reaction: proline is first activated by ATP to form Pro-AMP and then transferred to the acceptor end of tRNA(Pro). The chain is Proline--tRNA ligase from Paracoccus denitrificans (strain Pd 1222).